The sequence spans 154 residues: UPF0127 protein TSIB_1463 (154 aa).

The protein belongs to the UPF0127 family.

This is UPF0127 protein TSIB_1463 from Thermococcus sibiricus (strain DSM 12597 / MM 739).